A 394-amino-acid polypeptide reads, in one-letter code: Isopentenyl-diphosphate delta-isomerase (394 aa).

Residue 10–11 coordinates substrate; it reads RK. FMN is bound by residues threonine 67, 68–70, serine 101, and asparagine 129; that span reads GMT. Residue 101–103 participates in substrate binding; the sequence is SQR. Residue glutamine 168 participates in substrate binding. Glutamate 169 provides a ligand contact to Mg(2+). Residues lysine 200, serine 225, threonine 230, 279–281, and 300–301 each bind FMN; these read GMR and AL.

The protein belongs to the IPP isomerase type 2 family. As to quaternary structure, homooctamer. Dimer of tetramers. Requires FMN as cofactor. NADPH is required as a cofactor. Mg(2+) serves as cofactor.

It is found in the cytoplasm. It catalyses the reaction isopentenyl diphosphate = dimethylallyl diphosphate. Its function is as follows. Involved in the biosynthesis of isoprenoids. Catalyzes the 1,3-allylic rearrangement of the homoallylic substrate isopentenyl (IPP) to its allylic isomer, dimethylallyl diphosphate (DMAPP). The protein is Isopentenyl-diphosphate delta-isomerase of Pyrococcus furiosus (strain ATCC 43587 / DSM 3638 / JCM 8422 / Vc1).